Consider the following 270-residue polypeptide: Phosphonoacetaldehyde hydrolase (270 aa).

The active-site Nucleophile is aspartate 11. Residues aspartate 11 and alanine 13 each coordinate Mg(2+). Catalysis depends on lysine 53, which acts as the Schiff-base intermediate with substrate. Aspartate 187 provides a ligand contact to Mg(2+).

This sequence belongs to the HAD-like hydrolase superfamily. PhnX family. As to quaternary structure, homodimer. Requires Mg(2+) as cofactor.

The enzyme catalyses phosphonoacetaldehyde + H2O = acetaldehyde + phosphate + H(+). Its function is as follows. Involved in phosphonate degradation. This chain is Phosphonoacetaldehyde hydrolase, found in Salmonella choleraesuis (strain SC-B67).